Consider the following 565-residue polypeptide: Zinc finger protein 512 (565 aa).

Residues 1–30 (MSSRLGAVPATSGPTTFKQQRSTRIVGAKN) are disordered. The segment covering 12 to 23 (SGPTTFKQQRST) has biased composition (polar residues). Residues Lys18 and Lys83 each participate in a glycyl lysine isopeptide (Lys-Gly) (interchain with G-Cter in SUMO2) cross-link. Residues 85–147 (AATSHVEGSG…QARRIRKEPP (63 aa)) are disordered. The segment covering 118 to 129 (KKHKLYGRKQRP) has biased composition (basic residues). The C2H2-type 1 zinc-finger motif lies at 196–219 (FTCHHCGKQLRSLAGMKYHVMANH). Lys226 is covalently cross-linked (Glycyl lysine isopeptide (Lys-Gly) (interchain with G-Cter in SUMO2)). The C2H2-type 2 zinc-finger motif lies at 286–309 (LKCHHCGKPYRSKAGLAYHLRSEH). A Glycyl lysine isopeptide (Lys-Gly) (interchain with G-Cter in SUMO2) cross-link involves residue Lys332. The segment at 405-429 (IQCPNQGCEAVYSSVSGLKAHLGSC) adopts a C2H2-type 3; atypical zinc-finger fold. Residues 439–462 (YKCLLCQKEFVSESGVKYHINSVH) form a C2H2-type 4 zinc finger. Residues 484–493 (KQRQQEEEKR) show a composition bias toward basic and acidic residues. The disordered stretch occupies residues 484–565 (KQRQQEEEKR…PKTNHKRGRK (82 aa)). Basic residues predominate over residues 494–507 (RQQHRSRRSLRRRQ). Residues 522 to 531 (VGKDQRRNEE) show a composition bias toward basic and acidic residues. Over residues 554-565 (KPPKTNHKRGRK) the composition is skewed to basic residues.

Belongs to the krueppel C2H2-type zinc-finger protein family.

The protein localises to the nucleus. Functionally, may be involved in transcriptional regulation. The chain is Zinc finger protein 512 (ZNF512) from Macaca fascicularis (Crab-eating macaque).